Reading from the N-terminus, the 277-residue chain is Translation initiation factor 2 subunit alpha (277 aa).

The 72-residue stretch at 22 to 93 folds into the S1 motif domain; it reads GEIVVGTVQE…KRGQVDVSLK (72 aa).

The protein belongs to the eIF-2-alpha family. As to quaternary structure, heterotrimer composed of an alpha, a beta and a gamma chain.

Its function is as follows. eIF-2 functions in the early steps of protein synthesis by forming a ternary complex with GTP and initiator tRNA. The protein is Translation initiation factor 2 subunit alpha (eif2a) of Aeropyrum pernix (strain ATCC 700893 / DSM 11879 / JCM 9820 / NBRC 100138 / K1).